We begin with the raw amino-acid sequence, 107 residues long: U1-lycotoxin-Ls1g (107 aa).

Positions 1–20 (MMKVLVVVALLVTLISYSSS) are cleaved as a signal peptide. Positions 21–41 (EGIDDLEADELLSLMANEQTR) are excised as a propeptide. 3 disulfide bridges follow: C51–C68, C58–C86, and C70–C84.

The protein belongs to the neurotoxin 19 (CSTX) family. 04 (U1-Lctx) subfamily. As to expression, expressed by the venom gland.

Its subcellular location is the secreted. The polypeptide is U1-lycotoxin-Ls1g (Lycosa singoriensis (Wolf spider)).